A 245-amino-acid polypeptide reads, in one-letter code: Pyridoxine 5'-phosphate synthase (245 aa).

A 3-amino-2-oxopropyl phosphate-binding site is contributed by Asn-7. A 1-deoxy-D-xylulose 5-phosphate-binding site is contributed by 9 to 10 (DH). Arg-18 contributes to the 3-amino-2-oxopropyl phosphate binding site. His-43 acts as the Proton acceptor in catalysis. 1-deoxy-D-xylulose 5-phosphate is bound by residues Arg-45 and His-50. The active-site Proton acceptor is the Glu-70. Thr-100 is a binding site for 1-deoxy-D-xylulose 5-phosphate. The Proton donor role is filled by His-190. 3-amino-2-oxopropyl phosphate-binding positions include Gly-191 and 212–213 (GH).

Belongs to the PNP synthase family. In terms of assembly, homooctamer; tetramer of dimers.

It localises to the cytoplasm. It carries out the reaction 3-amino-2-oxopropyl phosphate + 1-deoxy-D-xylulose 5-phosphate = pyridoxine 5'-phosphate + phosphate + 2 H2O + H(+). The protein operates within cofactor biosynthesis; pyridoxine 5'-phosphate biosynthesis; pyridoxine 5'-phosphate from D-erythrose 4-phosphate: step 5/5. Functionally, catalyzes the complicated ring closure reaction between the two acyclic compounds 1-deoxy-D-xylulose-5-phosphate (DXP) and 3-amino-2-oxopropyl phosphate (1-amino-acetone-3-phosphate or AAP) to form pyridoxine 5'-phosphate (PNP) and inorganic phosphate. The chain is Pyridoxine 5'-phosphate synthase from Prochlorococcus marinus (strain NATL2A).